Reading from the N-terminus, the 126-residue chain is Large ribosomal subunit protein bL12 (126 aa).

It belongs to the bacterial ribosomal protein bL12 family. In terms of assembly, homodimer. Part of the ribosomal stalk of the 50S ribosomal subunit. Forms a multimeric L10(L12)X complex, where L10 forms an elongated spine to which 2 to 4 L12 dimers bind in a sequential fashion. Binds GTP-bound translation factors.

Functionally, forms part of the ribosomal stalk which helps the ribosome interact with GTP-bound translation factors. Is thus essential for accurate translation. In Chlorobaculum parvum (strain DSM 263 / NCIMB 8327) (Chlorobium vibrioforme subsp. thiosulfatophilum), this protein is Large ribosomal subunit protein bL12.